The sequence spans 313 residues: tRNA pseudouridine synthase B (313 aa).

Asp-46 acts as the Nucleophile in catalysis.

This sequence belongs to the pseudouridine synthase TruB family. Type 1 subfamily.

It carries out the reaction uridine(55) in tRNA = pseudouridine(55) in tRNA. Its function is as follows. Responsible for synthesis of pseudouridine from uracil-55 in the psi GC loop of transfer RNAs. The chain is tRNA pseudouridine synthase B from Nitrosospira multiformis (strain ATCC 25196 / NCIMB 11849 / C 71).